A 152-amino-acid chain; its full sequence is Large ribosomal subunit protein uL15 (152 aa).

Residues 31-58 (GASCGFGMRGQKSRSGRPTRPGFEGGQM) form a disordered region.

The protein belongs to the universal ribosomal protein uL15 family. In terms of assembly, part of the 50S ribosomal subunit.

In terms of biological role, binds to the 23S rRNA. The protein is Large ribosomal subunit protein uL15 of Parasynechococcus marenigrum (strain WH8102).